The following is a 405-amino-acid chain: 4-hydroxy-3-methylbut-2-enyl diphosphate reductase (405 aa).

Cys66 is a binding site for [4Fe-4S] cluster. His96 serves as a coordination point for (2E)-4-hydroxy-3-methylbut-2-enyl diphosphate. Residue His96 coordinates dimethylallyl diphosphate. His96 is a binding site for isopentenyl diphosphate. Cys157 lines the [4Fe-4S] cluster pocket. His185 lines the (2E)-4-hydroxy-3-methylbut-2-enyl diphosphate pocket. Position 185 (His185) interacts with dimethylallyl diphosphate. His185 serves as a coordination point for isopentenyl diphosphate. Catalysis depends on Glu187, which acts as the Proton donor. Residue Thr250 participates in (2E)-4-hydroxy-3-methylbut-2-enyl diphosphate binding. Cys288 contributes to the [4Fe-4S] cluster binding site. Ser317, Ser318, Asn319, and Ser380 together coordinate (2E)-4-hydroxy-3-methylbut-2-enyl diphosphate. Ser317, Ser318, Asn319, and Ser380 together coordinate dimethylallyl diphosphate. Residues Ser317, Ser318, Asn319, and Ser380 each contribute to the isopentenyl diphosphate site.

Belongs to the IspH family. It depends on [4Fe-4S] cluster as a cofactor.

The enzyme catalyses isopentenyl diphosphate + 2 oxidized [2Fe-2S]-[ferredoxin] + H2O = (2E)-4-hydroxy-3-methylbut-2-enyl diphosphate + 2 reduced [2Fe-2S]-[ferredoxin] + 2 H(+). It catalyses the reaction dimethylallyl diphosphate + 2 oxidized [2Fe-2S]-[ferredoxin] + H2O = (2E)-4-hydroxy-3-methylbut-2-enyl diphosphate + 2 reduced [2Fe-2S]-[ferredoxin] + 2 H(+). The protein operates within isoprenoid biosynthesis; dimethylallyl diphosphate biosynthesis; dimethylallyl diphosphate from (2E)-4-hydroxy-3-methylbutenyl diphosphate: step 1/1. Its pathway is isoprenoid biosynthesis; isopentenyl diphosphate biosynthesis via DXP pathway; isopentenyl diphosphate from 1-deoxy-D-xylulose 5-phosphate: step 6/6. In terms of biological role, catalyzes the conversion of 1-hydroxy-2-methyl-2-(E)-butenyl 4-diphosphate (HMBPP) into a mixture of isopentenyl diphosphate (IPP) and dimethylallyl diphosphate (DMAPP). Acts in the terminal step of the DOXP/MEP pathway for isoprenoid precursor biosynthesis. The protein is 4-hydroxy-3-methylbut-2-enyl diphosphate reductase of Prochlorococcus marinus (strain SARG / CCMP1375 / SS120).